The primary structure comprises 353 residues: NADH-ubiquinone oxidoreductase chain 2 (353 aa).

8 helical membrane-spanning segments follow: residues 4 to 24 (SVVL…LSSH), 60 to 80 (FLVQ…QLWL), 96 to 116 (IVLT…FWFP), 139 to 159 (FIIL…TLGC), 198 to 218 (IYVG…VFLI), 241 to 261 (GNVL…TGFL), 274 to 294 (NLLV…FFYL), and 330 to 350 (VLLS…PALW).

Belongs to the complex I subunit 2 family.

Its subcellular location is the mitochondrion inner membrane. It catalyses the reaction a ubiquinone + NADH + 5 H(+)(in) = a ubiquinol + NAD(+) + 4 H(+)(out). Functionally, core subunit of the mitochondrial membrane respiratory chain NADH dehydrogenase (Complex I) that is believed to belong to the minimal assembly required for catalysis. Complex I functions in the transfer of electrons from NADH to the respiratory chain. The immediate electron acceptor for the enzyme is believed to be ubiquinone. This Pisaster ochraceus (Ochre sea star) protein is NADH-ubiquinone oxidoreductase chain 2 (ND2).